Reading from the N-terminus, the 427-residue chain is UPF0597 protein FN1147 (427 aa).

Belongs to the UPF0597 family.

The polypeptide is UPF0597 protein FN1147 (Fusobacterium nucleatum subsp. nucleatum (strain ATCC 25586 / DSM 15643 / BCRC 10681 / CIP 101130 / JCM 8532 / KCTC 2640 / LMG 13131 / VPI 4355)).